The primary structure comprises 122 residues: MIQSFTRLAVADNSGAKELMCIKVLGGSKRRYATLGDIIVCSVKKALPNGKIKKGQVVKAVVVRTKREVQRDNGSLIRFDENAAVILDSKKEPVGTRIFGPVGREVRYANFMKIVSLAPEVL.

The protein belongs to the universal ribosomal protein uL14 family. Part of the 50S ribosomal subunit. Forms a cluster with proteins L3 and L19. In the 70S ribosome, L14 and L19 interact and together make contacts with the 16S rRNA in bridges B5 and B8.

Functionally, binds to 23S rRNA. Forms part of two intersubunit bridges in the 70S ribosome. This is Large ribosomal subunit protein uL14 from Campylobacter concisus (strain 13826).